The following is a 406-amino-acid chain: 3-isopropylmalate dehydrogenase, chloroplastic (406 aa).

The transit peptide at 1–34 directs the protein to the chloroplast; it reads MAAALQTNIRPVKFPATLRALTKQSSPAPFRVRC. Ser71 carries the phosphoserine modification. Position 117–130 (117–130) interacts with NAD(+); the sequence is GYKWDKNEKHLKPE. 4 residues coordinate substrate: Arg137, Arg147, Arg175, and Asp265. Mg(2+) contacts are provided by Asp265, Asp289, and Asp293. Position 323 to 335 (323 to 335) interacts with NAD(+); that stretch reads GSAPDIAGQDKAN.

Belongs to the isocitrate and isopropylmalate dehydrogenases family. Homodimer. Requires Mg(2+) as cofactor. It depends on Mn(2+) as a cofactor.

It localises to the plastid. The protein localises to the chloroplast. The catalysed reaction is (2R,3S)-3-isopropylmalate + NAD(+) = 4-methyl-2-oxopentanoate + CO2 + NADH. It participates in amino-acid biosynthesis; L-leucine biosynthesis; L-leucine from 3-methyl-2-oxobutanoate: step 3/4. Its function is as follows. Catalyzes the oxidation of 3-carboxy-2-hydroxy-4-methylpentanoate (3-isopropylmalate) to 3-carboxy-4-methyl-2-oxopentanoate. The product decarboxylates to 4-methyl-2 oxopentanoate. In Brassica napus (Rape), this protein is 3-isopropylmalate dehydrogenase, chloroplastic.